The primary structure comprises 394 residues: Elongation factor Tu (394 aa).

The region spanning 10–204 is the tr-type G domain; that stretch reads KPHVNVGTIG…HLDTYIPEPE (195 aa). The interval 19–26 is G1; the sequence is GHVDHGKT. 19–26 contributes to the GTP binding site; sequence GHVDHGKT. A Mg(2+)-binding site is contributed by Thr-26. The tract at residues 60 to 64 is G2; that stretch reads GITIN. The G3 stretch occupies residues 81-84; it reads DCPG. Residues 81–85 and 136–139 contribute to the GTP site; these read DCPGH and NKCD. Positions 136–139 are G4; the sequence is NKCD. Positions 174–176 are G5; sequence SAL.

Belongs to the TRAFAC class translation factor GTPase superfamily. Classic translation factor GTPase family. EF-Tu/EF-1A subfamily. In terms of assembly, monomer.

It is found in the cytoplasm. The catalysed reaction is GTP + H2O = GDP + phosphate + H(+). Functionally, GTP hydrolase that promotes the GTP-dependent binding of aminoacyl-tRNA to the A-site of ribosomes during protein biosynthesis. In Aeromonas salmonicida (strain A449), this protein is Elongation factor Tu.